A 395-amino-acid polypeptide reads, in one-letter code: uncharacterized protein (395 aa).

Transmembrane regions (helical) follow at residues 15-35 (ILAFSFFIAFLVVVSVLVTVF), 56-76 (WPWILLIVLGIVVTLAWNIII), 86-106 (FHAPWWEWVLFACVVQFFQIV), 131-151 (AVLLVTSTGAFWNLAQALITW), 175-195 (WFSFAGMIFDVVVAILFIFIA), 254-274 (LANILIAVVGYFSVFAVFAIV), 298-318 (IAITASNFIPVPSGEGATQFV), and 348-368 (VYIPAILFSLCFIGWVVQVVI).

It localises to the cell membrane. This is an uncharacterized protein from Mycoplasma pneumoniae (strain ATCC 29342 / M129 / Subtype 1) (Mycoplasmoides pneumoniae).